We begin with the raw amino-acid sequence, 968 residues long: RNA polymerase-associated protein RapA (968 aa).

The 171-residue stretch at 164-334 (DVGRRHAPRV…FARLRLLDPN (171 aa)) folds into the Helicase ATP-binding domain. Position 177-184 (177-184 (DEVGLGKT)) interacts with ATP. Positions 280 to 283 (DEAH) match the DEAH box motif. A Helicase C-terminal domain is found at 490–685 (RVEWLMGYLT…ALKAQLEQGR (196 aa)).

It belongs to the SNF2/RAD54 helicase family. RapA subfamily. Interacts with the RNAP. Has a higher affinity for the core RNAP than for the holoenzyme. Its ATPase activity is stimulated by binding to RNAP.

In terms of biological role, transcription regulator that activates transcription by stimulating RNA polymerase (RNAP) recycling in case of stress conditions such as supercoiled DNA or high salt concentrations. Probably acts by releasing the RNAP, when it is trapped or immobilized on tightly supercoiled DNA. Does not activate transcription on linear DNA. Probably not involved in DNA repair. This chain is RNA polymerase-associated protein RapA, found in Salmonella choleraesuis (strain SC-B67).